A 516-amino-acid chain; its full sequence is Putative protein NRT1/ PTR FAMILY 2.2 (516 aa).

A run of 11 helical transmembrane segments spans residues 31 to 51 (TLLGLSIASFGWVMNLVVFLI), 67 to 87 (IVNGCVSMLPVVAAILADSFF), 90 to 110 (IPVISVSAFISLLGIILLTMI), 138 to 158 (ILYIALALVIIGSAGTRFTLA), 174 to 194 (FFNWYFLTLYTGAITGATAIV), 201 to 221 (SWKLGFGLCAVANLISFIVFV), 320 to 340 (LLLAIIFVSTPMVTQTSLIIL), 362 to 382 (VIVIITACIVILMNNCLVYPM), 394 to 414 (LQKVGIGHVFIILSMAISAIV), 437 to 457 (FIASVVIGISFYLSTALITLI), and 476 to 496 (VYWLLVIVGVLNYFLVCAWFY).

It belongs to the major facilitator superfamily. Proton-dependent oligopeptide transporter (POT/PTR) (TC 2.A.17) family. In terms of tissue distribution, not detected.

The protein resides in the membrane. Transporter involved in a passive nitrate efflux. This chain is Putative protein NRT1/ PTR FAMILY 2.2 (NPF2.2), found in Arabidopsis thaliana (Mouse-ear cress).